Here is a 218-residue protein sequence, read N- to C-terminus: Thiopurine S-methyltransferase (218 aa).

4 residues coordinate S-adenosyl-L-methionine: Trp10, Leu45, Glu66, and Arg123.

This sequence belongs to the class I-like SAM-binding methyltransferase superfamily. TPMT family.

It is found in the cytoplasm. It catalyses the reaction S-adenosyl-L-methionine + a thiopurine = S-adenosyl-L-homocysteine + a thiopurine S-methylether.. This Xanthomonas campestris pv. campestris (strain 8004) protein is Thiopurine S-methyltransferase.